The sequence spans 383 residues: Prokineticin receptor 2 (383 aa).

Topologically, residues 1–54 (MGDQNGNTSFAPDLNPPQDHVSLLPLNYSYGDYDIPLDDDEDVTKTQTFFAAKI) are extracellular. N-linked (GlcNAc...) asparagine glycans are attached at residues asparagine 7 and asparagine 27. The chain crosses the membrane as a helical span at residues 55-75 (VIGVALAGIMLVCGVGNFVFI). The Cytoplasmic portion of the chain corresponds to 76 to 89 (AALARYKKLRNLTN). The chain crosses the membrane as a helical span at residues 90–110 (LLIANLAISDFLVAIVCCPFE). Residues 111 to 136 (MDYYVVRQLSWEHGHVLCASVNYLRT) are Extracellular-facing. Cysteines 128 and 207 form a disulfide. A helical membrane pass occupies residues 137 to 157 (VSLYVSTNALLAIAIDRYLAI). Topologically, residues 158–170 (VHPLKRMNYQTAS) are cytoplasmic. Residues 171–191 (FLIALVWMVSILIAIPSAYFT) traverse the membrane as a helical segment. The Extracellular portion of the chain corresponds to 192–222 (TETILVIVKNQEKLFCGQIWPVDQQLYYKSY). The helical transmembrane segment at 223 to 243 (FLFVFGLEFVGPVVTMTLCYA) threads the bilayer. The Cytoplasmic portion of the chain corresponds to 244 to 272 (RISQELWFKAVPGFQTEQIRKRLRCRRKT). The chain crosses the membrane as a helical span at residues 273–293 (VLLLMGILTAYVLCWAPFYGF). Residues 294-312 (TIVRDFFPTLVVKEKHYLT) lie on the Extracellular side of the membrane. The helical transmembrane segment at 313 to 333 (AFYVVECIAMSNSMINTICFV) threads the bilayer. Topologically, residues 334 to 383 (TVKNNTMKYFKKMLLLHWRPSHYGSKSSADLDLKTSGVPATEEVDCIRLK) are cytoplasmic.

The protein belongs to the G-protein coupled receptor 1 family. In terms of assembly, homodimer. In terms of tissue distribution, abundantly expressed in the CNS and reproductive organs with the highest levels in the cerebrum, cerebellum, testis and ovary.

Its subcellular location is the cell membrane. Functionally, receptor for prokineticin 2. Exclusively coupled to the G(q) subclass of heteromeric G proteins. Activation leads to mobilization of calcium, stimulation of phosphoinositide turnover and activation of p44/p42 mitogen-activated protein kinase. This Rattus norvegicus (Rat) protein is Prokineticin receptor 2 (Prokr2).